The sequence spans 282 residues: Phosphate import ATP-binding protein PstB (282 aa).

Over residues 1-25 (MKALNANISTMSEVSRSATPQSDSP) the composition is skewed to polar residues. Positions 1–26 (MKALNANISTMSEVSRSATPQSDSPA) are disordered. The 242-residue stretch at 36–277 (IRIANFNAWY…PQEKRTDDYV (242 aa)) folds into the ABC transporter domain. 68–75 (GPSGCGKS) is a binding site for ATP.

Belongs to the ABC transporter superfamily. Phosphate importer (TC 3.A.1.7) family. The complex is composed of two ATP-binding proteins (PstB), two transmembrane proteins (PstC and PstA) and a solute-binding protein (PstS).

It is found in the cell inner membrane. It catalyses the reaction phosphate(out) + ATP + H2O = ADP + 2 phosphate(in) + H(+). In terms of biological role, part of the ABC transporter complex PstSACB involved in phosphate import. Responsible for energy coupling to the transport system. The polypeptide is Phosphate import ATP-binding protein PstB (Rhodopirellula baltica (strain DSM 10527 / NCIMB 13988 / SH1)).